The chain runs to 109 residues: Nucleoid-associated protein AHA_2212 (109 aa).

Disordered stretches follow at residues 1–23 (MFGK…RMQK) and 88–109 (NKSK…KMPF). Over residues 11-23 (MKQAQQMQERMQK) the composition is skewed to low complexity.

The protein belongs to the YbaB/EbfC family. As to quaternary structure, homodimer.

Its subcellular location is the cytoplasm. It localises to the nucleoid. Functionally, binds to DNA and alters its conformation. May be involved in regulation of gene expression, nucleoid organization and DNA protection. This chain is Nucleoid-associated protein AHA_2212, found in Aeromonas hydrophila subsp. hydrophila (strain ATCC 7966 / DSM 30187 / BCRC 13018 / CCUG 14551 / JCM 1027 / KCTC 2358 / NCIMB 9240 / NCTC 8049).